Reading from the N-terminus, the 540-residue chain is Chaperonin GroEL (540 aa).

Residues 30 to 33, 87 to 91, G414, 479 to 481, and D495 contribute to the ATP site; these read TLGP, DGTTT, and NAL.

It belongs to the chaperonin (HSP60) family. In terms of assembly, forms a cylinder of 14 subunits composed of two heptameric rings stacked back-to-back. Interacts with the co-chaperonin GroES.

It is found in the cytoplasm. It carries out the reaction ATP + H2O + a folded polypeptide = ADP + phosphate + an unfolded polypeptide.. Functionally, together with its co-chaperonin GroES, plays an essential role in assisting protein folding. The GroEL-GroES system forms a nano-cage that allows encapsulation of the non-native substrate proteins and provides a physical environment optimized to promote and accelerate protein folding. This Carboxydothermus hydrogenoformans (strain ATCC BAA-161 / DSM 6008 / Z-2901) protein is Chaperonin GroEL.